Here is a 233-residue protein sequence, read N- to C-terminus: Antigenic membrane protein (233 aa).

Residues 1 to 32 (MQNQKNQKSLVAKVLVLFAAVALMFVGVQVFA) form the signal peptide. Residues 206–226 (FLTLVAVVVVAAVAGGVFFFV) traverse the membrane as a helical segment.

Its subcellular location is the cell membrane. This chain is Antigenic membrane protein (amp), found in Onion yellows phytoplasma (strain OY-M).